The chain runs to 342 residues: Signaling lymphocytic activation molecule (342 aa).

An N-terminal signal peptide occupies residues 1–26 (MDSRGFLSLRCLLVLALASKLSCGTG). At 27–237 (ESLMNCPEVP…CRPESSVPRQ (211 aa)) the chain is on the extracellular side. The Ig-like V-type domain occupies 29–138 (LMNCPEVPGK…QHFCLQLKLY (110 aa)). Residues Asn57, Asn102, Asn125, Asn150, Asn157, Asn189, and Asn217 are each glycosylated (N-linked (GlcNAc...) asparagine). The Ig-like C2-type domain maps to 144–223 (PEIKVLNWTQ…PVSNRSWSFN (80 aa)). 2 disulfide bridges follow: Cys158–Cys228 and Cys164–Cys209. Residues 238 to 261 (WRLYAGLFLGGIVGVILIFEVVLL) traverse the membrane as a helical segment. Residues 262–342 (LLRRRGKTNH…VYASVTFPES (81 aa)) are Cytoplasmic-facing. The ITSM 1 signature appears at 282–287 (TIYAQV). Phosphotyrosine; by FYN occurs at positions 284, 310, and 334. The SH2-binding signature appears at 310–315 (YVAATE). The ITSM 2 signature appears at 332–337 (TVYASV).

As to quaternary structure, interacts (via cytoplasmic domain) with SH2D1A and SH2D1B; SH2D1A mediates association with FYN. Interacts (via cytoplasmic domain phosphorylated on tyrosine residues) with INPP5D and PTPN11; presence of SH2D1A facilitates binding to INPP5D. Interacts with MAP4K1. Interacts with PIK3C3, BECN1 and UVRAG; indicative for an association with PI3K complex II (PI3KC3-C2). Interacts with canine distemper virus HN protein; suggesting that it may serve as a receptor. Post-translationally, phosphorylated on tyrosine residues by FYN.

The protein localises to the cell membrane. Functionally, self-ligand receptor of the signaling lymphocytic activation molecule (SLAM) family. SLAM receptors triggered by homo- or heterotypic cell-cell interactions are modulating the activation and differentiation of a wide variety of immune cells and thus are involved in the regulation and interconnection of both innate and adaptive immune response. Activities are controlled by presence or absence of small cytoplasmic adapter proteins, SH2D1A/SAP and/or SH2D1B/EAT-2. SLAMF1-induced signal-transduction events in T-lymphocytes are different from those in B-cells. Two modes of SLAMF1 signaling seem to exist: one depending on SH2D1A (and perhaps SH2D1B) and another in which protein-tyrosine phosphatase 2C (PTPN11)-dependent signal transduction operates. Initially it has been proposed that association with SH2D1A prevents binding to inhibitory effectors including INPP5D/SHIP1 and PTPN11/SHP-2. However, signaling is also regulated by SH2D1A which can simultaneously interact with and recruit FYN which subsequently phosphorylates and activates SLAMF1. Mediates IL-2-independent proliferation of activated T cells during immune responses and induces IFN-gamma production. Downstreaming signaling involves INPP5D/SHIP1, DOK1 and DOK2 leading to inhibited IFN-gamma production in T-cells, and PRKCQ, BCL10 and NFKB1 leading to increased T-cell activation and Th2 cytokine production. Promotes T-cell receptor-induced IL-4 secretion by CD4(+) cells. Inhibits antigen receptor-mediated production of IFN-gamma, but not IL-2, in CD4(-)/CD8(-) T-cells. Required for IL-4 production by germinal centers T follicular helper (T(Fh))cells. May inhibit CD40-induced signal transduction in monocyte-derived dendritic cells. May play a role in allergic responses and may regulate allergen-induced Th2 cytokine and Th1 cytokine secretion. In conjunction with SLAMF6 controls the transition between positive selection and the subsequent expansion and differentiation of the thymocytic natural killer T (NKT) cell lineage. Involved in the peripheral differentiation of indifferent natural killer T (iNKT) cells toward a regulatory NKT2 type. In macrophages involved in down-regulation of IL-12, TNF-alpha and nitric oxide in response to lipopolysaccharide (LPS). In B-cells activates the ERK signaling pathway independently of SH2D1A but implicating both, SYK and INPP5D, and activates Akt signaling dependent on SYK and SH2D1A. In conjunction with SLAMF5 and SLAMF6 may be a negative regulator of the humoral immune response. This Canis lupus familiaris (Dog) protein is Signaling lymphocytic activation molecule (SLAMF1).